A 250-amino-acid polypeptide reads, in one-letter code: 2,3-bisphosphoglycerate-dependent phosphoglycerate mutase (250 aa).

Substrate is bound by residues 10–17 (RHGESQWN), 23–24 (TG), Arg62, 89–92 (ERHY), Lys100, 116–117 (RR), and 185–186 (GN). His11 serves as the catalytic Tele-phosphohistidine intermediate. The Proton donor/acceptor role is filled by Glu89.

The protein belongs to the phosphoglycerate mutase family. BPG-dependent PGAM subfamily. Homodimer.

The enzyme catalyses (2R)-2-phosphoglycerate = (2R)-3-phosphoglycerate. Its pathway is carbohydrate degradation; glycolysis; pyruvate from D-glyceraldehyde 3-phosphate: step 3/5. Functionally, catalyzes the interconversion of 2-phosphoglycerate and 3-phosphoglycerate. The sequence is that of 2,3-bisphosphoglycerate-dependent phosphoglycerate mutase from Klebsiella pneumoniae (strain 342).